Here is a 447-residue protein sequence, read N- to C-terminus: Protein CLT1, chloroplastic (447 aa).

Residues 1–48 (MATTSSDRLIAGLTASIGSIESRYANPAQSVSLICRNQINGAPPIVLR) constitute a chloroplast transit peptide. A run of 10 helical transmembrane segments spans residues 103–123 (MEIV…RVLY), 135–155 (FFLA…ILYF), 172–192 (LPFL…MAAA), 200–220 (TTVL…IFLG), 228–248 (ILGC…GSGA), 256–276 (GILW…DTVM), 304–324 (IFQV…WGIP), 351–371 (GAPL…ISLL), 387–407 (TVSV…LGVA), and 413–433 (GFVA…WTPS).

Belongs to the CRT-like transporter family.

It localises to the plastid. It is found in the chloroplast membrane. Functionally, involved in thiol transport from the plastid to the cytosol. Transports probably both glutathione (GSH) and its precursor, gamma-glutamylcysteine (gamma-EC). Exhibits some functional redundancy with CLT3 in maintaining the root GSH pool. The polypeptide is Protein CLT1, chloroplastic (Arabidopsis thaliana (Mouse-ear cress)).